The chain runs to 187 residues: Cell division protein SepF (187 aa).

Belongs to the SepF family. As to quaternary structure, homodimer. Interacts with FtsZ.

Its subcellular location is the cytoplasm. In terms of biological role, cell division protein that is part of the divisome complex and is recruited early to the Z-ring. Probably stimulates Z-ring formation, perhaps through the cross-linking of FtsZ protofilaments. Its function overlaps with FtsA. The protein is Cell division protein SepF of Streptococcus suis (strain 98HAH33).